A 115-amino-acid chain; its full sequence is NAD(P)H-quinone oxidoreductase subunit M (115 aa).

It belongs to the complex I NdhM subunit family. As to quaternary structure, NDH-1 can be composed of about 15 different subunits; different subcomplexes with different compositions have been identified which probably have different functions.

Its subcellular location is the cellular thylakoid membrane. The catalysed reaction is a plastoquinone + NADH + (n+1) H(+)(in) = a plastoquinol + NAD(+) + n H(+)(out). It carries out the reaction a plastoquinone + NADPH + (n+1) H(+)(in) = a plastoquinol + NADP(+) + n H(+)(out). Its function is as follows. NDH-1 shuttles electrons from an unknown electron donor, via FMN and iron-sulfur (Fe-S) centers, to quinones in the respiratory and/or the photosynthetic chain. The immediate electron acceptor for the enzyme in this species is believed to be plastoquinone. Couples the redox reaction to proton translocation, and thus conserves the redox energy in a proton gradient. Cyanobacterial NDH-1 also plays a role in inorganic carbon-concentration. The sequence is that of NAD(P)H-quinone oxidoreductase subunit M from Synechococcus sp. (strain WH7803).